A 112-amino-acid chain; its full sequence is UPF0122 protein CPR_1686 (112 aa).

Belongs to the UPF0122 family.

Might take part in the signal recognition particle (SRP) pathway. This is inferred from the conservation of its genetic proximity to ftsY/ffh. May be a regulatory protein. The chain is UPF0122 protein CPR_1686 from Clostridium perfringens (strain SM101 / Type A).